The sequence spans 279 residues: Ribosomal RNA large subunit methyltransferase E (279 aa).

Positions 1 to 10 (MSDDDQKPED) are enriched in basic and acidic residues. A disordered region spans residues 1–66 (MSDDDQKPED…MKKGGDARAA (66 aa)). Glycine 136, tryptophan 138, aspartate 154, aspartate 170, and aspartate 194 together coordinate S-adenosyl-L-methionine. Lysine 234 (proton acceptor) is an active-site residue.

This sequence belongs to the class I-like SAM-binding methyltransferase superfamily. RNA methyltransferase RlmE family.

The protein localises to the cytoplasm. It catalyses the reaction uridine(2552) in 23S rRNA + S-adenosyl-L-methionine = 2'-O-methyluridine(2552) in 23S rRNA + S-adenosyl-L-homocysteine + H(+). In terms of biological role, specifically methylates the uridine in position 2552 of 23S rRNA at the 2'-O position of the ribose in the fully assembled 50S ribosomal subunit. The sequence is that of Ribosomal RNA large subunit methyltransferase E from Maricaulis maris (strain MCS10) (Caulobacter maris).